A 364-amino-acid polypeptide reads, in one-letter code: Paraneoplastic antigen Ma2 homolog (364 aa).

Ala2 bears the N-acetylalanine mark. The span at 335 to 353 (EEEEASFENESIEEPEEGD) shows a compositional bias: acidic residues. The disordered stretch occupies residues 335–364 (EEEEASFENESIEEPEEGDGYGRWNHEGDD).

It belongs to the PNMA family.

Its subcellular location is the nucleus. The protein resides in the nucleolus. The protein is Paraneoplastic antigen Ma2 homolog (PNMA2) of Pongo abelii (Sumatran orangutan).